Reading from the N-terminus, the 140-residue chain is UPF0102 protein Ppro_1186 (140 aa).

Residues M1–G27 are disordered. Polar residues predominate over residues E10–S25.

The protein belongs to the UPF0102 family.

In Pelobacter propionicus (strain DSM 2379 / NBRC 103807 / OttBd1), this protein is UPF0102 protein Ppro_1186.